The chain runs to 307 residues: Glutaminase (307 aa).

Residues S66, N116, E160, N167, Y191, Y243, and V261 each coordinate substrate.

It belongs to the glutaminase family. In terms of assembly, homotetramer.

It catalyses the reaction L-glutamine + H2O = L-glutamate + NH4(+). This Saccharophagus degradans (strain 2-40 / ATCC 43961 / DSM 17024) protein is Glutaminase.